We begin with the raw amino-acid sequence, 298 residues long: MNHIQEAFLNTLKVERNFSEHTLKSYQDDLIQFNQFLEQEHLQLNTFEYRDARNYLSYLYSNHLKRTSVSRKISTLRTFYEYWMTLDENIINPFVQLVHPKKEKYLPQFFYEEEMEALFKTVEEDTSKSLRDRVILELLYATGIRVSELVNIKKQDIDFYANGVTVLGKGSKERFVPFGAYCRQSIENYLEHFKPIQSCNHDFLIVNMKGEAITERGVRYVLNDIVKRTAGVSEIHPHKLRHTFATHLLNQGADLRTVQSLLGHVNLSTTGKYTHVSNQQLRKVYLNAHPRAKKENET.

Positions 1 to 84 (MNHIQEAFLN…TLRTFYEYWM (84 aa)) constitute a Core-binding (CB) domain. In terms of domain architecture, Tyr recombinase spans 105 to 286 (YLPQFFYEEE…SNQQLRKVYL (182 aa)). Catalysis depends on residues Arg-145, Lys-169, His-238, Arg-241, and His-264. Residue Tyr-273 is the O-(3'-phospho-DNA)-tyrosine intermediate of the active site.

The protein belongs to the 'phage' integrase family. XerC subfamily. Forms a cyclic heterotetrameric complex composed of two molecules of XerC and two molecules of XerD.

It is found in the cytoplasm. Site-specific tyrosine recombinase, which acts by catalyzing the cutting and rejoining of the recombining DNA molecules. The XerC-XerD complex is essential to convert dimers of the bacterial chromosome into monomers to permit their segregation at cell division. It also contributes to the segregational stability of plasmids. The chain is Tyrosine recombinase XerC from Staphylococcus aureus (strain MRSA252).